Reading from the N-terminus, the 385-residue chain is Methylthioribose-1-phosphate isomerase (385 aa).

D255 acts as the Proton donor in catalysis.

Belongs to the eIF-2B alpha/beta/delta subunits family. MtnA subfamily.

Its subcellular location is the cytoplasm. The protein localises to the nucleus. The enzyme catalyses 5-(methylsulfanyl)-alpha-D-ribose 1-phosphate = 5-(methylsulfanyl)-D-ribulose 1-phosphate. It functions in the pathway amino-acid biosynthesis; L-methionine biosynthesis via salvage pathway; L-methionine from S-methyl-5-thio-alpha-D-ribose 1-phosphate: step 1/6. Functionally, catalyzes the interconversion of methylthioribose-1-phosphate (MTR-1-P) into methylthioribulose-1-phosphate (MTRu-1-P). The sequence is that of Methylthioribose-1-phosphate isomerase (mri1) from Aspergillus clavatus (strain ATCC 1007 / CBS 513.65 / DSM 816 / NCTC 3887 / NRRL 1 / QM 1276 / 107).